Here is a 441-residue protein sequence, read N- to C-terminus: Amino-acid acetyltransferase (441 aa).

The region spanning glutamate 295–serine 434 is the N-acetyltransferase domain.

This sequence belongs to the acetyltransferase family. ArgA subfamily. In terms of assembly, homohexamer.

It is found in the cytoplasm. The enzyme catalyses L-glutamate + acetyl-CoA = N-acetyl-L-glutamate + CoA + H(+). The protein operates within amino-acid biosynthesis; L-arginine biosynthesis; N(2)-acetyl-L-ornithine from L-glutamate: step 1/4. The chain is Amino-acid acetyltransferase from Yersinia pseudotuberculosis serotype O:1b (strain IP 31758).